Reading from the N-terminus, the 472-residue chain is Cannabinoid receptor 1 (472 aa).

Residues 1–116 are Extracellular-facing; it reads MKSILDGLAD…CFMILNPSQQ (116 aa). Residues 2-23 form a required for mitochondrial localization region; that stretch reads KSILDGLADTTFRTITTDLLYV. N-linked (GlcNAc...) asparagine glycans are attached at residues Asn-77 and Asn-83. Residues 117 to 142 form a helical membrane-spanning segment; the sequence is LAIAVLSLTLGTFTVLENLLVLCVIL. Over 143–154 the chain is Cytoplasmic; the sequence is HSRSLRCRPSYH. The chain crosses the membrane as a helical span at residues 155–175; it reads FIGSLAVADLLGSVIFVYSFV. Residues 176–187 lie on the Extracellular side of the membrane; that stretch reads DFHVFHRKDSPN. A helical transmembrane segment spans residues 188-212; that stretch reads VFLFKLGGVTASFTASVGSLFLTAI. Residues 213-232 are Cytoplasmic-facing; the sequence is DRYISIHRPLAYKKIVTRPK. Residues 233 to 255 traverse the membrane as a helical segment; the sequence is AVVAFCLMWTIAIVIAVLPLLGW. The Extracellular portion of the chain corresponds to 256 to 273; that stretch reads NCKKLQSVCSDIFPLIDE. A helical membrane pass occupies residues 274–299; it reads TYLMFWIGVTSVLLLFIVYAYMYILW. The Cytoplasmic portion of the chain corresponds to 300 to 344; that stretch reads KAHIHAVRMIQRGTQKSIIIHTSEDGKVQVTRPDQARMDIRLAKT. Residues 345–365 traverse the membrane as a helical segment; sequence LVLILVVLIICWGPLLAIMVY. The Extracellular segment spans residues 366 to 377; sequence DVFGKMNKLIKT. Residues 378-399 form a helical membrane-spanning segment; it reads VFAFCSMLCLLNSTVNPIIYAL. Over 400–472 the chain is Cytoplasmic; sequence RSKDLRHAFR…VSTNTSAKAL (73 aa). Residue Cys-415 is the site of S-palmitoyl cysteine attachment. 2 positions are modified to phosphoserine: Ser-425 and Ser-429.

The protein belongs to the G-protein coupled receptor 1 family. In terms of assembly, interacts (via C-terminus) with CNRIP1; this interaction attenuates constitutive, but not agonist-dependent, inhibition of voltage-gated Ca(2+) channels in neurons. Associates with G protein alpha subunits, including G(i) alpha-1/GNAI1, G(i) alpha-3/GNAI3 and G(o)-alpha/GNAO1; palmitoylation is important for interaction with GNAI3 and GNAO1. In terms of processing, palmitoylation at Cys-415 is important for recruitment at plasma membrane and lipid rafts and association with G protein alpha subunits. Expressed in cerebral arterial muscle cells and cerebral cortex (at protein level).

Its subcellular location is the cell membrane. It localises to the membrane raft. It is found in the mitochondrion outer membrane. The protein localises to the cell projection. The protein resides in the axon. Its subcellular location is the presynapse. Its activity is regulated as follows. Hemopressin, a peptide derived from hemoglobin subunit alpha (HBA1 and/or HBA2), acts as an antagonist peptide: hemopressin-binding efficiently blocks cannabinoid receptor CNR1 and subsequent signaling. G-protein coupled receptor for endogenous cannabinoids (eCBs), including N-arachidonoylethanolamide (also called anandamide or AEA) and 2-arachidonoylglycerol (2-AG), as well as phytocannabinoids, such as delta(9)-tetrahydrocannabinol (THC). Mediates many cannabinoid-induced effects, acting, among others, on food intake, memory loss, gastrointestinal motility, catalepsy, ambulatory activity, anxiety, chronic pain. Signaling typically involves reduction in cyclic AMP. In the hypothalamus, may have a dual effect on mitochondrial respiration depending upon the agonist dose and possibly upon the cell type. Increases respiration at low doses, while decreases respiration at high doses. At high doses, CNR1 signal transduction involves G-protein alpha-i protein activation and subsequent inhibition of mitochondrial soluble adenylate cyclase, decrease in cyclic AMP concentration, inhibition of protein kinase A (PKA)-dependent phosphorylation of specific subunits of the mitochondrial electron transport system, including NDUFS2. In the hypothalamus, inhibits leptin-induced reactive oxygen species (ROS) formation and mediates cannabinoid-induced increase in SREBF1 and FASN gene expression. In response to cannabinoids, drives the release of orexigenic beta-endorphin, not that of melanocyte-stimulating hormone alpha/alpha-MSH, from hypothalamic POMC neurons, hence promoting food intake. In the hippocampus, regulates cellular respiration and energy production in response to cannabinoids. Involved in cannabinoid-dependent depolarization-induced suppression of inhibition (DSI), a process in which depolarization of CA1 postsynaptic pyramidal neurons mobilizes eCBs, which retrogradely activate presynaptic CB1 receptors, transiently decreasing GABAergic inhibitory neurotransmission. Also reduces excitatory synaptic transmission. In superior cervical ganglions and cerebral vascular smooth muscle cells, inhibits voltage-gated Ca(2+) channels in a constitutive, as well as agonist-dependent manner. In cerebral vascular smooth muscle cells, inhibition of voltage-gated Ca(2+) channels leads to vasodilation and decrease in vascular tone. Induces leptin production in adipocytes and reduces LRP2-mediated leptin clearance in the kidney, hence participating in hyperleptinemia. In adipose tissue, CNR1 signaling leads to increased expression of SREBF1, ACACA and FASN genes. In the liver, activation by endocannabinoids leads to increased de novo lipogenesis and reduced fatty acid catabolism, associated with increased expression of SREBF1/SREBP-1, GCK, ACACA, ACACB and FASN genes. May also affect de novo cholesterol synthesis and HDL-cholesteryl ether uptake. Peripherally modulates energy metabolism. In high carbohydrate diet-induced obesity, may decrease the expression of mitochondrial dihydrolipoyl dehydrogenase/DLD in striated muscles, as well as that of selected glucose/ pyruvate metabolic enzymes, hence affecting energy expenditure through mitochondrial metabolism. In response to cannabinoid anandamide, elicits a pro-inflammatory response in macrophages, which involves NLRP3 inflammasome activation and IL1B and IL18 secretion. In macrophages infiltrating pancreatic islets, this process may participate in the progression of type-2 diabetes and associated loss of pancreatic beta-cells. The sequence is that of Cannabinoid receptor 1 (CNR1) from Felis catus (Cat).